The sequence spans 540 residues: Chaperonin GroEL (540 aa).

Residues Thr-30–Pro-33, Lys-51, Asp-87–Thr-91, Gly-415, Asn-479–Ala-481, and Asp-495 each bind ATP.

The protein belongs to the chaperonin (HSP60) family. Forms a cylinder of 14 subunits composed of two heptameric rings stacked back-to-back. Interacts with the co-chaperonin GroES.

Its subcellular location is the cytoplasm. It catalyses the reaction ATP + H2O + a folded polypeptide = ADP + phosphate + an unfolded polypeptide.. Functionally, together with its co-chaperonin GroES, plays an essential role in assisting protein folding. The GroEL-GroES system forms a nano-cage that allows encapsulation of the non-native substrate proteins and provides a physical environment optimized to promote and accelerate protein folding. The sequence is that of Chaperonin GroEL from Raoultella ornithinolytica (Klebsiella ornithinolytica).